The sequence spans 386 residues: Succinate--CoA ligase [ADP-forming] subunit beta (386 aa).

The region spanning 9–244 (KAVLRSYGVS…LDEEDAKEIE (236 aa)) is the ATP-grasp domain. Residues Lys-46, 53-55 (GRG), Glu-99, Cys-102, and Glu-107 each bind ATP. 2 residues coordinate Mg(2+): Asn-199 and Asp-213. Substrate contacts are provided by residues Asn-264 and 321–323 (GIM).

It belongs to the succinate/malate CoA ligase beta subunit family. Heterotetramer of two alpha and two beta subunits. Requires Mg(2+) as cofactor.

The enzyme catalyses succinate + ATP + CoA = succinyl-CoA + ADP + phosphate. It carries out the reaction GTP + succinate + CoA = succinyl-CoA + GDP + phosphate. Its pathway is carbohydrate metabolism; tricarboxylic acid cycle; succinate from succinyl-CoA (ligase route): step 1/1. Succinyl-CoA synthetase functions in the citric acid cycle (TCA), coupling the hydrolysis of succinyl-CoA to the synthesis of either ATP or GTP and thus represents the only step of substrate-level phosphorylation in the TCA. The beta subunit provides nucleotide specificity of the enzyme and binds the substrate succinate, while the binding sites for coenzyme A and phosphate are found in the alpha subunit. The polypeptide is Succinate--CoA ligase [ADP-forming] subunit beta (Bacillus anthracis (strain A0248)).